The following is an 85-amino-acid chain: U4-theraphotoxin-Hhn1p (85 aa).

The first 22 residues, 1 to 22, serve as a signal peptide directing secretion; that stretch reads MKMTLIAIPTCAAVLVLHTTAA. Positions 23 to 48 are excised as a propeptide; that stretch reads EELEAESQLMEVGMPDTELEAVDGER. Disulfide bonds link C52–C66, C56–C77, and C71–C82.

The protein belongs to the neurotoxin 12 (Hwtx-2) family. 02 (Hwtx-2) subfamily. As to expression, expressed by the venom gland.

Its subcellular location is the secreted. Functionally, postsynaptic neurotoxin. The protein is U4-theraphotoxin-Hhn1p of Cyriopagopus hainanus (Chinese bird spider).